The following is a 728-amino-acid chain: 1,4-alpha-glucan branching enzyme GlgB (728 aa).

The active-site Nucleophile is the aspartate 405. The Proton donor role is filled by glutamate 458.

Belongs to the glycosyl hydrolase 13 family. GlgB subfamily. Monomer.

The enzyme catalyses Transfers a segment of a (1-&gt;4)-alpha-D-glucan chain to a primary hydroxy group in a similar glucan chain.. It functions in the pathway glycan biosynthesis; glycogen biosynthesis. Catalyzes the formation of the alpha-1,6-glucosidic linkages in glycogen by scission of a 1,4-alpha-linked oligosaccharide from growing alpha-1,4-glucan chains and the subsequent attachment of the oligosaccharide to the alpha-1,6 position. This Shigella boydii serotype 4 (strain Sb227) protein is 1,4-alpha-glucan branching enzyme GlgB.